Consider the following 178-residue polypeptide: Mediator of RNA polymerase II transcription subunit 30 (178 aa).

The disordered stretch occupies residues 1-22 (MSTPPLAASGMAPGPFAGPQAQ). Serine 2 is modified (N-acetylserine). Positions 10-22 (GMAPGPFAGPQAQ) are enriched in low complexity. Coiled coils occupy residues 70–94 (TYQD…KLRL) and 133–173 (RFAS…INAM).

The protein belongs to the Mediator complex subunit 30 family. Component of the Mediator complex, which is composed of MED1, MED4, MED6, MED7, MED8, MED9, MED10, MED11, MED12, MED13, MED13L, MED14, MED15, MED16, MED17, MED18, MED19, MED20, MED21, MED22, MED23, MED24, MED25, MED26, MED27, MED29, MED30, MED31, CCNC, CDK8 and CDC2L6/CDK11. The MED12, MED13, CCNC and CDK8 subunits form a distinct module termed the CDK8 module. Mediator containing the CDK8 module is less active than Mediator lacking this module in supporting transcriptional activation. Individual preparations of the Mediator complex lacking one or more distinct subunits have been variously termed ARC, CRSP, DRIP, PC2, SMCC and TRAP. As to expression, expressed in brain, heart, kidney, liver, lung, pancreas, placenta and skeletal muscle.

The protein resides in the nucleus. Its function is as follows. Component of the Mediator complex, a coactivator involved in the regulated transcription of nearly all RNA polymerase II-dependent genes. Mediator functions as a bridge to convey information from gene-specific regulatory proteins to the basal RNA polymerase II transcription machinery. Mediator is recruited to promoters by direct interactions with regulatory proteins and serves as a scaffold for the assembly of a functional preinitiation complex with RNA polymerase II and the general transcription factors. The polypeptide is Mediator of RNA polymerase II transcription subunit 30 (MED30) (Homo sapiens (Human)).